The sequence spans 421 residues: Probable indole-3-pyruvate monooxygenase YUCCA9 (421 aa).

29–34 provides a ligand contact to FAD; sequence GAGPSG. NADP(+) is bound at residue 196–201; the sequence is GCGNSG.

This sequence belongs to the FMO family. FAD serves as cofactor.

The catalysed reaction is indole-3-pyruvate + NADPH + O2 + H(+) = (indol-3-yl)acetate + CO2 + NADP(+) + H2O. It functions in the pathway plant hormone metabolism; auxin biosynthesis. Functionally, involved in auxin biosynthesis. Belongs to the set of redundant YUCCA genes probably responsible for auxin biosynthesis in roots. This Arabidopsis thaliana (Mouse-ear cress) protein is Probable indole-3-pyruvate monooxygenase YUCCA9 (YUC9).